Consider the following 740-residue polypeptide: Ion-translocating oxidoreductase complex subunit C (740 aa).

2 consecutive 4Fe-4S ferredoxin-type domains span residues 369–397 (GEPQ…QQLY) and 407–436 (KATT…VQYF). The [4Fe-4S] cluster site is built by cysteine 377, cysteine 380, cysteine 383, cysteine 387, cysteine 416, cysteine 419, cysteine 422, and cysteine 426. The segment at 602–716 (KLEQQQANAE…EPEEQVDPRK (115 aa)) is disordered.

The protein belongs to the 4Fe4S bacterial-type ferredoxin family. RnfC subfamily. The complex is composed of six subunits: RsxA, RsxB, RsxC, RsxD, RsxE and RsxG. [4Fe-4S] cluster serves as cofactor.

It localises to the cell inner membrane. Its function is as follows. Part of a membrane-bound complex that couples electron transfer with translocation of ions across the membrane. Required to maintain the reduced state of SoxR. The chain is Ion-translocating oxidoreductase complex subunit C from Escherichia coli O139:H28 (strain E24377A / ETEC).